The chain runs to 95 residues: Small ribosomal subunit protein uS19 (95 aa).

The disordered stretch occupies residues 75 to 95 (APTRSFRGHGGKKADKRGKMK). Positions 80-95 (FRGHGGKKADKRGKMK) are enriched in basic residues.

This sequence belongs to the universal ribosomal protein uS19 family.

Protein S19 forms a complex with S13 that binds strongly to the 16S ribosomal RNA. The protein is Small ribosomal subunit protein uS19 of Roseiflexus sp. (strain RS-1).